A 143-amino-acid chain; its full sequence is Large ribosomal subunit protein uL11 (143 aa).

The protein belongs to the universal ribosomal protein uL11 family. As to quaternary structure, part of the ribosomal stalk of the 50S ribosomal subunit. Interacts with L10 and the large rRNA to form the base of the stalk. L10 forms an elongated spine to which L12 dimers bind in a sequential fashion forming a multimeric L10(L12)X complex. In terms of processing, one or more lysine residues are methylated.

Forms part of the ribosomal stalk which helps the ribosome interact with GTP-bound translation factors. This is Large ribosomal subunit protein uL11 from Ralstonia nicotianae (strain ATCC BAA-1114 / GMI1000) (Ralstonia solanacearum).